Here is a 398-residue protein sequence, read N- to C-terminus: Probable aminomethyltransferase (398 aa).

This sequence belongs to the GcvT family. In terms of assembly, the glycine cleavage system is composed of four proteins: P, T, L and H.

It catalyses the reaction N(6)-[(R)-S(8)-aminomethyldihydrolipoyl]-L-lysyl-[protein] + (6S)-5,6,7,8-tetrahydrofolate = N(6)-[(R)-dihydrolipoyl]-L-lysyl-[protein] + (6R)-5,10-methylene-5,6,7,8-tetrahydrofolate + NH4(+). Functionally, the glycine cleavage system catalyzes the degradation of glycine. This is Probable aminomethyltransferase from Pyrococcus horikoshii (strain ATCC 700860 / DSM 12428 / JCM 9974 / NBRC 100139 / OT-3).